Consider the following 607-residue polypeptide: Elongation factor 4 (607 aa).

Positions Glu11 to Thr193 constitute a tr-type G domain. Residues Asp23 to Thr28 and Asn140 to Asp143 contribute to the GTP site.

The protein belongs to the TRAFAC class translation factor GTPase superfamily. Classic translation factor GTPase family. LepA subfamily.

It localises to the cell membrane. The catalysed reaction is GTP + H2O = GDP + phosphate + H(+). In terms of biological role, required for accurate and efficient protein synthesis under certain stress conditions. May act as a fidelity factor of the translation reaction, by catalyzing a one-codon backward translocation of tRNAs on improperly translocated ribosomes. Back-translocation proceeds from a post-translocation (POST) complex to a pre-translocation (PRE) complex, thus giving elongation factor G a second chance to translocate the tRNAs correctly. Binds to ribosomes in a GTP-dependent manner. The chain is Elongation factor 4 from Streptococcus pneumoniae (strain Hungary19A-6).